The following is a 165-amino-acid chain: Ecotin-like protein 4 (165 aa).

The protein belongs to the protease inhibitor I11 (ecotin) family.

This chain is Ecotin-like protein 4, found in Trypanosoma brucei brucei (strain 927/4 GUTat10.1).